A 161-amino-acid polypeptide reads, in one-letter code: Cyclic pyranopterin monophosphate synthase (161 aa).

Residues 76–78 (MCH) and 114–115 (ME) contribute to the substrate site. Aspartate 129 is a catalytic residue.

The protein belongs to the MoaC family. In terms of assembly, homohexamer; trimer of dimers.

The catalysed reaction is (8S)-3',8-cyclo-7,8-dihydroguanosine 5'-triphosphate = cyclic pyranopterin phosphate + diphosphate. Its pathway is cofactor biosynthesis; molybdopterin biosynthesis. Its function is as follows. Catalyzes the conversion of (8S)-3',8-cyclo-7,8-dihydroguanosine 5'-triphosphate to cyclic pyranopterin monophosphate (cPMP). The sequence is that of Cyclic pyranopterin monophosphate synthase from Clostridium acetobutylicum (strain ATCC 824 / DSM 792 / JCM 1419 / IAM 19013 / LMG 5710 / NBRC 13948 / NRRL B-527 / VKM B-1787 / 2291 / W).